We begin with the raw amino-acid sequence, 439 residues long: Acyl transferase 4 (439 aa).

Active-site proton acceptor residues include His166 and Asp382.

The protein belongs to the plant acyltransferase family.

In terms of biological role, grass-specific monolignol p-coumaroyl transferase involved in the biosynthesis of acylated monolignols or monolignol conjugates that serve as monomer precursors of lignin. Can synthesize sinapyl p-coumarate, p-coumaryl p-coumarate, sinapyl caffeate and p-coumaryl caffeate in vitro. The sequence is that of Acyl transferase 4 from Oryza sativa subsp. japonica (Rice).